We begin with the raw amino-acid sequence, 243 residues long: Methylthioribulose-1-phosphate dehydratase (243 aa).

Cysteine 90 lines the substrate pocket. 2 residues coordinate Zn(2+): histidine 108 and histidine 110. Glutamate 131 acts as the Proton donor/acceptor in catalysis. Histidine 193 contributes to the Zn(2+) binding site.

The protein belongs to the aldolase class II family. MtnB subfamily. Zn(2+) is required as a cofactor.

The protein localises to the cytoplasm. The enzyme catalyses 5-(methylsulfanyl)-D-ribulose 1-phosphate = 5-methylsulfanyl-2,3-dioxopentyl phosphate + H2O. The protein operates within amino-acid biosynthesis; L-methionine biosynthesis via salvage pathway; L-methionine from S-methyl-5-thio-alpha-D-ribose 1-phosphate: step 2/6. Functionally, catalyzes the dehydration of methylthioribulose-1-phosphate (MTRu-1-P) into 2,3-diketo-5-methylthiopentyl-1-phosphate (DK-MTP-1-P). This is Methylthioribulose-1-phosphate dehydratase from Zygosaccharomyces rouxii (strain ATCC 2623 / CBS 732 / NBRC 1130 / NCYC 568 / NRRL Y-229).